Reading from the N-terminus, the 755-residue chain is Glucosylglycerol-phosphate synthase (755 aa).

Belongs to the glycosyltransferase 20 family.

The enzyme catalyses ADP-alpha-D-glucose + sn-glycerol 3-phosphate = 2-O-(alpha-D-glucopyranosyl)-sn-glycerol 3-phosphate + ADP + H(+). It participates in glycan metabolism; glucosylglycerol biosynthesis. Functionally, involved in salt tolerance by producing GG-phosphate from ADP-glucose and glycerol-3-phosphate (G3P), an intermediate in the synthesis of the osmolyte glucosylglycerol (GG). The chain is Glucosylglycerol-phosphate synthase (ggpS) from Pseudomonas anguilliseptica.